Here is a 387-residue protein sequence, read N- to C-terminus: Intraflagellar transport protein 57 (387 aa).

It belongs to the IFT57 family.

Its subcellular location is the cell projection. The protein resides in the cilium. It localises to the flagellum. The protein localises to the cytoplasm. It is found in the cytoskeleton. Its subcellular location is the flagellum axoneme. The protein resides in the flagellum basal body. Component of the intraflagellar transport complex B (IFT-B) involved in flagellar assembly. This is Intraflagellar transport protein 57 from Giardia intestinalis (strain ATCC 50803 / WB clone C6) (Giardia lamblia).